The chain runs to 229 residues: 5'-methylthioadenosine/S-adenosylhomocysteine nucleosidase (229 aa).

Residue E12 is the Proton acceptor of the active site. Residues G78, I152, and 173 to 174 (ME) contribute to the substrate site. D197 serves as the catalytic Proton donor.

This sequence belongs to the PNP/UDP phosphorylase family. MtnN subfamily.

It carries out the reaction S-adenosyl-L-homocysteine + H2O = S-(5-deoxy-D-ribos-5-yl)-L-homocysteine + adenine. The enzyme catalyses S-methyl-5'-thioadenosine + H2O = 5-(methylsulfanyl)-D-ribose + adenine. The catalysed reaction is 5'-deoxyadenosine + H2O = 5-deoxy-D-ribose + adenine. Its pathway is amino-acid biosynthesis; L-methionine biosynthesis via salvage pathway; S-methyl-5-thio-alpha-D-ribose 1-phosphate from S-methyl-5'-thioadenosine (hydrolase route): step 1/2. Its function is as follows. Catalyzes the irreversible cleavage of the glycosidic bond in both 5'-methylthioadenosine (MTA) and S-adenosylhomocysteine (SAH/AdoHcy) to adenine and the corresponding thioribose, 5'-methylthioribose and S-ribosylhomocysteine, respectively. Also cleaves 5'-deoxyadenosine, a toxic by-product of radical S-adenosylmethionine (SAM) enzymes, into 5-deoxyribose and adenine. In Histophilus somni (strain 2336) (Haemophilus somnus), this protein is 5'-methylthioadenosine/S-adenosylhomocysteine nucleosidase.